A 373-amino-acid chain; its full sequence is Indole glucosinolate O-methyltransferase 4 (373 aa).

Positions 217, 240, 260, 261, and 274 each coordinate S-adenosyl-L-homocysteine. Histidine 278 acts as the Proton acceptor in catalysis.

This sequence belongs to the class I-like SAM-binding methyltransferase superfamily. Cation-independent O-methyltransferase family. In terms of assembly, interacts with B'GAMMA.

It participates in secondary metabolite biosynthesis. Functionally, involved in indole glucosinolate biosynthesis. Catalyzes methoxylation reactions of the glucosinolate indole ring. Converts the hydroxy intermediates 4-hydroxy-indol-3-yl-methylglucosinolate (4OH-I3M) and 1-hydroxy-indol-3-yl-methylglucosinolate (1OH-I3M) to 4-methoxy-indol-3-yl-methylglucosinolate (4MO-I3M) and 1-methoxy-indol-3-yl-methylglucosinolate(1MO-I3M), respectively. This is Indole glucosinolate O-methyltransferase 4 from Arabidopsis thaliana (Mouse-ear cress).